We begin with the raw amino-acid sequence, 545 residues long: Membrane protein insertase YidC (545 aa).

The next 6 membrane-spanning stretches (helical) occupy residues 10 to 30 (AVYL…FLFS), 319 to 339 (LLYF…NVIP), 341 to 361 (WGLS…PLTF), 407 to 427 (IGGC…YGLV), 467 to 487 (ILPF…SNVS), and 502 to 522 (MPIM…IYWI).

The protein belongs to the OXA1/ALB3/YidC family. Type 1 subfamily. In terms of assembly, interacts with the Sec translocase complex via SecD. Specifically interacts with transmembrane segments of nascent integral membrane proteins during membrane integration.

The protein localises to the cell inner membrane. Required for the insertion and/or proper folding and/or complex formation of integral membrane proteins into the membrane. Involved in integration of membrane proteins that insert both dependently and independently of the Sec translocase complex, as well as at least some lipoproteins. Aids folding of multispanning membrane proteins. This chain is Membrane protein insertase YidC, found in Borrelia duttonii (strain Ly).